Here is a 270-residue protein sequence, read N- to C-terminus: MKQLNVHLISDYGVDALIAVSRASLERFEHLVSAEHHLWPSTTSIEKLQQVFLHIERSSFVLYSIRERIIRDTLKDFCQKRKIPCIAVLSRVIRELSSYLGIEPIHTSKEEYQTFNEDYFARIDAMNYVLTHDDGQNTWDLDEANIIIVGPSRTSKSPTSVYLSHLGYRVANIPFVNNIPLPAKLTTLENILIVGLTINPDRLIEIRKARLSISQNYDNPVYADREQILEELTNARKTFIKNNWPVIDVTHRSVEEIAAAIMKEYTMRKY.

An ADP-binding site is contributed by 150-157 (GPSRTSKS).

This sequence belongs to the pyruvate, phosphate/water dikinase regulatory protein family. PDRP subfamily.

The catalysed reaction is N(tele)-phospho-L-histidyl/L-threonyl-[pyruvate, phosphate dikinase] + ADP = N(tele)-phospho-L-histidyl/O-phospho-L-threonyl-[pyruvate, phosphate dikinase] + AMP + H(+). It catalyses the reaction N(tele)-phospho-L-histidyl/O-phospho-L-threonyl-[pyruvate, phosphate dikinase] + phosphate + H(+) = N(tele)-phospho-L-histidyl/L-threonyl-[pyruvate, phosphate dikinase] + diphosphate. In terms of biological role, bifunctional serine/threonine kinase and phosphorylase involved in the regulation of the pyruvate, phosphate dikinase (PPDK) by catalyzing its phosphorylation/dephosphorylation. In Neorickettsia sennetsu (strain ATCC VR-367 / Miyayama) (Ehrlichia sennetsu), this protein is Putative pyruvate, phosphate dikinase regulatory protein.